Consider the following 411-residue polypeptide: MRRRRAGGRTMVERASKFVLVVAGSACFMLILYQYAGPGLSLGAPGGRVPPDDLDLFPTPDPHYEKKYYFPVRELERSLRFDMKGDDVIVFLHIQKTGGTTFGRHLVQNVRLEVPCDCRPGQKKCTCYRPNRRETWLFSRFSTGWSCGLHADWTELTNCVPGVLDRRDPAGLRSPRKFYYITLLRDPVSRYLSEWRHVQRGATWKTSLHMCDGRTPTPEELPPCYEGTDWSGCTLQEFMDCPYNLANNRQVRMLADLSLVGCYNLSFIPESKRAQLLLESAKKNLRGMAFFGLTEFQRKTQYLFERTFNLKFIRPFMQYNSTRAGGVEVDEDTIRHIEELNDLDMQLYDYAKDLFQQRYQYKRQLERREQRLRNREERLLHRSKEALPREDPEEPGRVPTEDYMSHIIEKW.

At 1 to 19 (MRRRRAGGRTMVERASKFV) the chain is on the cytoplasmic side. Residues 20–37 (LVVAGSACFMLILYQYAG) traverse the membrane as a helical; Signal-anchor for type II membrane protein segment. At 38–411 (PGLSLGAPGG…DYMSHIIEKW (374 aa)) the chain is on the lumenal side. 93–101 (HIQKTGGTT) lines the 3'-phosphoadenylyl sulfate pocket. Substrate is bound by residues 123–124 (KK), arginine 140, tryptophan 145, and histidine 150. The active-site Proton acceptor is the histidine 150. Residues arginine 185 and serine 193 each contribute to the 3'-phosphoadenylyl sulfate site. Positions 197 and 204 each coordinate substrate. N-linked (GlcNAc...) asparagine glycosylation is present at asparagine 264. 317–319 (MQY) provides a ligand contact to 3'-phosphoadenylyl sulfate. A glycan (N-linked (GlcNAc...) asparagine) is linked at asparagine 320. 323–324 (RA) serves as a coordination point for 3'-phosphoadenylyl sulfate. Positions 352–386 (KDLFQQRYQYKRQLERREQRLRNREERLLHRSKEA) form a coiled coil. The interval 380–401 (LHRSKEALPREDPEEPGRVPTE) is disordered.

It belongs to the sulfotransferase 6 family. N-glycosylated. Expressed in fetal brain and liver.

The protein localises to the membrane. It carries out the reaction alpha-D-glucosaminyl-[heparan sulfate](n) + 3'-phosphoadenylyl sulfate = 6-sulfo-alpha-D-glucosaminyl-[heparan sulfate](n) + adenosine 3',5'-bisphosphate + H(+). In terms of biological role, 6-O-sulfation enzyme which catalyzes the transfer of sulfate from 3'-phosphoadenosine 5'-phosphosulfate (PAPS) to position 6 of the N-sulfoglucosamine residue (GlcNS) of heparan sulfate. Critical for normal neuronal development where it may play a role in neuron branching. May also play a role in limb development. May prefer iduronic acid. This chain is Heparan-sulfate 6-O-sulfotransferase 1, found in Mus musculus (Mouse).